The following is a 382-amino-acid chain: Alkanesulfonate monooxygenase (382 aa).

It belongs to the SsuD family.

It carries out the reaction an alkanesulfonate + FMNH2 + O2 = an aldehyde + FMN + sulfite + H2O + 2 H(+). Catalyzes the desulfonation of aliphatic sulfonates. In Pseudomonas putida (strain W619), this protein is Alkanesulfonate monooxygenase.